Here is a 255-residue protein sequence, read N- to C-terminus: Fasciclin-like arabinogalactan protein 14 (255 aa).

A signal peptide spans 1 to 23 (MSSSLTIFFFFFASTFLYTSSNS). In terms of domain architecture, FAS1 spans 24-169 (FNITNILNEH…ISVLHISSAI (146 aa)). 4 N-linked (GlcNAc...) asparagine glycosylation sites follow: Asn25, Asn99, Asn125, and Asn159. Residues 179-231 (PTASPLSPVSSPPRPAESPNDDGQDFDEPPSSAPGAAADEPSENAGSANGVSR) form a disordered region. Acidic residues predominate over residues 197 to 206 (PNDDGQDFDE). Residues 222 to 231 (NAGSANGVSR) show a composition bias toward polar residues. The GPI-anchor amidated serine moiety is linked to residue Ser225. Residues 226 to 255 (ANGVSRNDSQPAFAFTLLMSFIWWFMARLR) constitute a propeptide, removed in mature form.

The protein belongs to the fasciclin-like AGP family.

It is found in the cell membrane. Functionally, may be a cell surface adhesion protein. This chain is Fasciclin-like arabinogalactan protein 14 (FLA14), found in Arabidopsis thaliana (Mouse-ear cress).